The chain runs to 61 residues: Photosystem II reaction center protein K (61 aa).

Positions 1–24 (MLNIFSLICICLNSALHSSSFFFA) are excised as a propeptide. The chain crosses the membrane as a helical span at residues 32-52 (FFNPIVDFMPVIPVLFFLLAL).

Belongs to the PsbK family. In terms of assembly, PSII is composed of 1 copy each of membrane proteins PsbA, PsbB, PsbC, PsbD, PsbE, PsbF, PsbH, PsbI, PsbJ, PsbK, PsbL, PsbM, PsbT, PsbX, PsbY, PsbZ, Psb30/Ycf12, at least 3 peripheral proteins of the oxygen-evolving complex and a large number of cofactors. It forms dimeric complexes.

The protein resides in the plastid. It localises to the chloroplast thylakoid membrane. Functionally, one of the components of the core complex of photosystem II (PSII). PSII is a light-driven water:plastoquinone oxidoreductase that uses light energy to abstract electrons from H(2)O, generating O(2) and a proton gradient subsequently used for ATP formation. It consists of a core antenna complex that captures photons, and an electron transfer chain that converts photonic excitation into a charge separation. The chain is Photosystem II reaction center protein K from Drimys granadensis.